The primary structure comprises 124 residues: uncharacterized protein (124 aa).

Interacts with dil1.

This is an uncharacterized protein from Schizosaccharomyces pombe (strain 972 / ATCC 24843) (Fission yeast).